Here is a 576-residue protein sequence, read N- to C-terminus: Malonate--CoA ligase ACSF3, mitochondrial (576 aa).

The transit peptide at 1–83 (MLPHVVLTFR…RSLRLSQEIC (83 aa)) directs the protein to the mitochondrion. ATP contacts are provided by residues 202–210 (TSGTTGRPK), Asp-457, Arg-471, and Lys-563.

This sequence belongs to the ATP-dependent AMP-binding enzyme family.

The protein localises to the mitochondrion. The enzyme catalyses tetracosanoate + ATP + CoA = tetracosanoyl-CoA + AMP + diphosphate. The catalysed reaction is malonate + ATP + CoA = malonyl-CoA + AMP + diphosphate. In terms of biological role, catalyzes the initial reaction in intramitochondrial fatty acid synthesis, by activating malonate and methylmalonate, but not acetate, into their respective CoA thioester. May have some preference toward very-long-chain substrates. In Homo sapiens (Human), this protein is Malonate--CoA ligase ACSF3, mitochondrial.